We begin with the raw amino-acid sequence, 513 residues long: Putative ADP-ribosyl glycohydrolase L444 (513 aa).

Over residues 1–23 the composition is skewed to basic and acidic residues; it reads MSDKIQSRESKTTKPTKTEKISD. The interval 1–33 is disordered; it reads MSDKIQSRESKTTKPTKTEKISDKSGNLSQVKS. The segment covering 24–33 has biased composition (polar residues); it reads KSGNLSQVKS.

The protein belongs to the ADP-ribosylglycohydrolase family.

This Acanthamoeba polyphaga mimivirus (APMV) protein is Putative ADP-ribosyl glycohydrolase L444.